We begin with the raw amino-acid sequence, 906 residues long: Protein translocase subunit SecA (906 aa).

Residues Gln-86, 104–108, and Asp-511 contribute to the ATP site; that span reads GEGKT. Basic and acidic residues-rich tracts occupy residues 853 to 865 and 877 to 888; these read HESV…RHDE and VRREGPKVKRND. The disordered stretch occupies residues 853-906; that stretch reads HESVIDNNQRHDEDEQEEAPKVQQVRREGPKVKRNDPCPCGSGKKYKQCHSKVE. The Zn(2+) site is built by Cys-890, Cys-892, Cys-901, and His-902. Over residues 896 to 906 the composition is skewed to basic residues; sequence KKYKQCHSKVE.

This sequence belongs to the SecA family. In terms of assembly, monomer and homodimer. Part of the essential Sec protein translocation apparatus which comprises SecA, SecYEG and auxiliary proteins SecDF-YajC and YidC. Zn(2+) is required as a cofactor.

It localises to the cell inner membrane. The protein resides in the cytoplasm. It carries out the reaction ATP + H2O + cellular proteinSide 1 = ADP + phosphate + cellular proteinSide 2.. Functionally, part of the Sec protein translocase complex. Interacts with the SecYEG preprotein conducting channel. Has a central role in coupling the hydrolysis of ATP to the transfer of proteins into and across the cell membrane, serving both as a receptor for the preprotein-SecB complex and as an ATP-driven molecular motor driving the stepwise translocation of polypeptide chains across the membrane. In Francisella tularensis subsp. tularensis (strain WY96-3418), this protein is Protein translocase subunit SecA.